Here is a 461-residue protein sequence, read N- to C-terminus: Nicotianamine aminotransferase A (461 aa).

The segment at 1 to 29 is disordered; sequence MVHQSNGHGEAAAAAANGKSNGHAAAANG. Over residues 11–29 the composition is skewed to low complexity; it reads AAAAAANGKSNGHAAAANG. Lys289 carries the post-translational modification N6-(pyridoxal phosphate)lysine.

It belongs to the class-I pyridoxal-phosphate-dependent aminotransferase family. The cofactor is pyridoxal 5'-phosphate. In terms of tissue distribution, expressed in roots, but not in leaves.

The catalysed reaction is nicotianamine + 2-oxoglutarate = 3''-deamino-3''-oxonicotianamine + L-glutamate. Functionally, involved in biosynthesis of mugineic acid family phytosiderophores. In Hordeum vulgare (Barley), this protein is Nicotianamine aminotransferase A.